We begin with the raw amino-acid sequence, 820 residues long: MTHKLTPMMQQWHQCKEQAGDCLLLFRLGEFYEAFFDDALILAQNLDITLTQRQNVPMSGIPATCLDGYVDRLVSRGFKVAIAEQADNTEGSKGLVPRTINRLITPGALLSSSLLPEKANNYVLAINQVGSLYGLSCLDLSIGTFLVAEYDNTKDLIEAICRLAPTELLSHAKFYQKNAAVIKQLQQHLRITLSEYVSWAFEYQSATKKLYTCFQVSSLDGFGLQGLVPAINAAGALLSYIQDKLLLPISHLSIPKIYGQQKHLLIDKASQTNLELLSPIHGEHGKGSLLQVMERTSTPMGGRLLRNTLINPFYDLKEITLRQDSVEFFLQQEDLRKILKRQLSCVRDLERLATKISTSLATPKDIGTLRDSLLSCTHIADNLQNCALPEFLENKFLIAPPLCSLIKTLSTELIQELPLKVSEGNIFANHYHPDLLRLRNIKENSKSWILEYQERIRNETGIKKLKVCYAQALGYYIEVASNLAPQLPKEFIRRQSRLHAERFTTQELQQFQDEVFSVEDKLQTLETKLFKELCFYIVEHRDLILKLSTAVADLDYVVSLAELAAEYDYRRPLVDHSDALSITKGMHPVALTLLDKGTFIPNDTVMHSAQTRMILLTGPNMAGKSTYIRQIALLVIMAQMGSFIPARSAHIGIVDKIFTRIGAGDNLSKGMSTFMVEMAETANILHNATDRSLVILDEIGRGTSTYDGLAIAQAVVEFLLFTDGKKAKTLFATHYKELTELEMHCQHVENFHAMVKENSGQPIFMYEIVKGHSKKSFGIHVAKLAGFPLSVVSRAQQILHQFEGPDLRPEPEKAQQLVMF.

618-625 (GPNMAGKS) contributes to the ATP binding site.

This sequence belongs to the DNA mismatch repair MutS family.

This protein is involved in the repair of mismatches in DNA. It is possible that it carries out the mismatch recognition step. This protein has a weak ATPase activity. This is DNA mismatch repair protein MutS from Chlamydia trachomatis serovar L2b (strain UCH-1/proctitis).